An 852-amino-acid polypeptide reads, in one-letter code: G-type lectin S-receptor-like serine/threonine-protein kinase At4g03230 (852 aa).

An N-terminal signal peptide occupies residues M1 to C19. The Bulb-type lectin domain occupies F20–S154. Topologically, residues F20 to K444 are extracellular. Residues N37, N59, N171, N187, N234, and N243 are each glycosylated (N-linked (GlcNAc...) asparagine). Positions P285–E321 constitute an EGF-like domain. Cystine bridges form between C289/C301 and C295/C309. Positions C339–V426 constitute a PAN domain. N352 carries N-linked (GlcNAc...) asparagine glycosylation. Intrachain disulfides connect C373–C400 and C377–C383. The helical transmembrane segment at T445–S465 threads the bilayer. Over S466–R852 the chain is Cytoplasmic. Positions F532–F819 constitute a Protein kinase domain. ATP contacts are provided by residues L538–V546 and K560. The residue at position 566 (S566) is a Phosphoserine. A caM-binding region spans residues K621–I638. The active-site Proton acceptor is D657. S661 and S674 each carry phosphoserine. T691 bears the Phosphothreonine mark. The tract at residues S826–R852 is disordered. Phosphoserine is present on residues S831 and S840. Over residues T834–T845 the composition is skewed to polar residues. T847 is subject to Phosphothreonine.

It belongs to the protein kinase superfamily. Ser/Thr protein kinase family.

It localises to the cell membrane. The catalysed reaction is L-seryl-[protein] + ATP = O-phospho-L-seryl-[protein] + ADP + H(+). It carries out the reaction L-threonyl-[protein] + ATP = O-phospho-L-threonyl-[protein] + ADP + H(+). This is G-type lectin S-receptor-like serine/threonine-protein kinase At4g03230 from Arabidopsis thaliana (Mouse-ear cress).